The following is a 488-amino-acid chain: Glutamyl-tRNA(Gln) amidotransferase subunit A (488 aa).

Catalysis depends on charge relay system residues lysine 77 and serine 152. The active-site Acyl-ester intermediate is serine 176.

The protein belongs to the amidase family. GatA subfamily. Heterotrimer of A, B and C subunits.

It carries out the reaction L-glutamyl-tRNA(Gln) + L-glutamine + ATP + H2O = L-glutaminyl-tRNA(Gln) + L-glutamate + ADP + phosphate + H(+). In terms of biological role, allows the formation of correctly charged Gln-tRNA(Gln) through the transamidation of misacylated Glu-tRNA(Gln) in organisms which lack glutaminyl-tRNA synthetase. The reaction takes place in the presence of glutamine and ATP through an activated gamma-phospho-Glu-tRNA(Gln). The protein is Glutamyl-tRNA(Gln) amidotransferase subunit A of Streptococcus agalactiae serotype Ia (strain ATCC 27591 / A909 / CDC SS700).